The primary structure comprises 273 residues: Peroxiredoxin-4 (273 aa).

Residues 1-40 (METWSKLLDGTTPSRRWRKLVLLLPPLLLFLLQTEALQGL) form the signal peptide. The region spanning 81–239 (AKISKPAPYW…TLRLVQAFQY (159 aa)) is the Thioredoxin domain. The active-site Cysteine sulfenic acid (-SOH) intermediate is the Cys126.

This sequence belongs to the peroxiredoxin family. AhpC/Prx1 subfamily. Homodimer; disulfide-linked, upon oxidation. 5 homodimers assemble to form a ring-like decamer. In terms of processing, the enzyme can be inactivated by further oxidation of the cysteine sulfenic acid (C(P)-SOH) to sulphinic acid (C(P)-SO2H) and sulphonic acid (C(P)-SO3H) instead of its condensation to a disulfide bond.

It localises to the cytoplasm. The protein localises to the endoplasmic reticulum. Its subcellular location is the secreted. The catalysed reaction is a hydroperoxide + [thioredoxin]-dithiol = an alcohol + [thioredoxin]-disulfide + H2O. Its function is as follows. Thiol-specific peroxidase that catalyzes the reduction of hydrogen peroxide and organic hydroperoxides to water and alcohols, respectively. Plays a role in cell protection against oxidative stress by detoxifying peroxides and as sensor of hydrogen peroxide-mediated signaling events. Regulates the activation of NF-kappa-B in the cytosol by a modulation of I-kappa-B-alpha phosphorylation. This Rattus norvegicus (Rat) protein is Peroxiredoxin-4 (Prdx4).